Reading from the N-terminus, the 112-residue chain is ATP synthase epsilon chain (112 aa).

Belongs to the ATPase epsilon chain family. In terms of assembly, F-type ATPases have 2 components, CF(1) - the catalytic core - and CF(0) - the membrane proton channel. CF(1) has five subunits: alpha(3), beta(3), gamma(1), delta(1), epsilon(1). CF(0) has three main subunits: a, b and c.

The protein resides in the cell inner membrane. In terms of biological role, produces ATP from ADP in the presence of a proton gradient across the membrane. The sequence is that of ATP synthase epsilon chain from Rickettsia felis (strain ATCC VR-1525 / URRWXCal2) (Rickettsia azadi).